A 312-amino-acid chain; its full sequence is Ribosomal protein L11 methyltransferase (312 aa).

S-adenosyl-L-methionine is bound by residues T162, G183, D205, and N248.

Belongs to the methyltransferase superfamily. PrmA family.

It is found in the cytoplasm. The enzyme catalyses L-lysyl-[protein] + 3 S-adenosyl-L-methionine = N(6),N(6),N(6)-trimethyl-L-lysyl-[protein] + 3 S-adenosyl-L-homocysteine + 3 H(+). In terms of biological role, methylates ribosomal protein L11. This Bacillus cereus (strain G9842) protein is Ribosomal protein L11 methyltransferase.